A 558-amino-acid chain; its full sequence is MTKYVFVTGGVVSSLGKGIAAASLAAILESRGLKVTLLKLDPYINVDPGTMSPLQHGEVFVTEDGAETDLDLGHYERFVSAKMRKSNNFTTGQIYESVISKERRGEYLGKTVQVIPHITSEIQAFVERGAKAIHDGKADVAICEIGGTVGDIESLPFLEAARQMSLRLPAHDCAFVHLTLVPYINSAGELKTKPTQHSVQKLREIGIMPTVLLCRADRPIPEDGRAKISLFSNVREEAVISVWDVDTIYKIPEMLHAQGMDDLICRELDLKAQPADLSVWAKLVYEMANPQHEVTIGMVGKYVELTESYKSLIEALRHAGIHTHTRVNINYIDSEDIEKEGVDCLQNLDAILVPGGFGKRGTEGKIAAIRYARENNVPYLGICLGMQLAVIEFARHVANLTKANSTEFDPQSDQPVVALITEWLDREGRVEKRSNDSDLGSTMRLGSQRCPVKAGTLAHRIYGAEVNERHRHRYEVNNTYVPQLERSGLIISARTPNEELPEMMELPSSMHPWFFGVQFHPEFTSTPRDGHPLFSAFISAALEHQKKLLKSKLHKGKT.

The segment at 1-270 is amidoligase domain; the sequence is MTKYVFVTGG…DDLICRELDL (270 aa). Ser13 lines the CTP pocket. Ser13 is a UTP binding site. Residues 14 to 19 and Asp71 contribute to the ATP site; that span reads SLGKGI. 2 residues coordinate Mg(2+): Asp71 and Glu144. Residues 151-153, 191-196, and Lys227 each bind CTP; these read DIE and KTKPTQ. Residues 191–196 and Lys227 each bind UTP; that span reads KTKPTQ. The 253-residue stretch at 295–547 folds into the Glutamine amidotransferase type-1 domain; sequence TIGMVGKYVE…ISAALEHQKK (253 aa). Residue Gly356 coordinates L-glutamine. The active-site Nucleophile; for glutamine hydrolysis is Cys383. L-glutamine-binding positions include 384–387, Glu407, and Arg473; that span reads LGMQ. Catalysis depends on residues His520 and Glu522.

Belongs to the CTP synthase family. In terms of assembly, homotetramer.

It carries out the reaction UTP + L-glutamine + ATP + H2O = CTP + L-glutamate + ADP + phosphate + 2 H(+). The catalysed reaction is L-glutamine + H2O = L-glutamate + NH4(+). It catalyses the reaction UTP + NH4(+) + ATP = CTP + ADP + phosphate + 2 H(+). The protein operates within pyrimidine metabolism; CTP biosynthesis via de novo pathway; CTP from UDP: step 2/2. With respect to regulation, allosterically activated by GTP, when glutamine is the substrate; GTP has no effect on the reaction when ammonia is the substrate. The allosteric effector GTP functions by stabilizing the protein conformation that binds the tetrahedral intermediate(s) formed during glutamine hydrolysis. Inhibited by the product CTP, via allosteric rather than competitive inhibition. In terms of biological role, catalyzes the ATP-dependent amination of UTP to CTP with either L-glutamine or ammonia as the source of nitrogen. Regulates intracellular CTP levels through interactions with the four ribonucleotide triphosphates. The sequence is that of CTP synthase from Polynucleobacter necessarius subsp. necessarius (strain STIR1).